Reading from the N-terminus, the 144-residue chain is Large ribosomal subunit protein uL16 (144 aa).

This sequence belongs to the universal ribosomal protein uL16 family. In terms of assembly, part of the 50S ribosomal subunit.

In terms of biological role, binds 23S rRNA and is also seen to make contacts with the A and possibly P site tRNAs. The chain is Large ribosomal subunit protein uL16 from Natranaerobius thermophilus (strain ATCC BAA-1301 / DSM 18059 / JW/NM-WN-LF).